We begin with the raw amino-acid sequence, 191 residues long: 3-isopropylmalate dehydratase small subunit (191 aa).

Belongs to the LeuD family. LeuD type 1 subfamily. In terms of assembly, heterodimer of LeuC and LeuD.

It catalyses the reaction (2R,3S)-3-isopropylmalate = (2S)-2-isopropylmalate. Its pathway is amino-acid biosynthesis; L-leucine biosynthesis; L-leucine from 3-methyl-2-oxobutanoate: step 2/4. Its function is as follows. Catalyzes the isomerization between 2-isopropylmalate and 3-isopropylmalate, via the formation of 2-isopropylmaleate. This chain is 3-isopropylmalate dehydratase small subunit, found in Anaeromyxobacter dehalogenans (strain 2CP-1 / ATCC BAA-258).